The following is an 856-amino-acid chain: Phosphatidylglycerol lysyltransferase (856 aa).

13 helical membrane passes run 7–27 (ALSILKIVFPIAVLLFVIYQS), 51–71 (LFMLVLIGLLAVAAMSLYDYV), 88–108 (VSWIANSFNNVLGFGGLAGVG), 128–148 (IAWLTSSMLLGLSVFSIFVAA), 161–181 (PWLWAVVIGFALILPLSLAVS), 208–228 (SVVEWLMAGTVIYFALFAMGI), 235–255 (VFGVFVIAAIGGMISLVPGGF), 280–300 (IVLYRLAYSFIPFILGLFFAA), 342–362 (SLSLIVFVAGLIVLASVSLPI), 375–395 (ALLLFNGLSLSSALILLILPI), 420–440 (FLKGLNISAIFVLPMIIVLLV), 459–479 (IFAVALFTVALFNYNLIAGFI), and 501–521 (HATIMAIIIVPLFFLIFTVVY).

It belongs to the LPG synthase family.

It is found in the cell membrane. The catalysed reaction is L-lysyl-tRNA(Lys) + a 1,2-diacyl-sn-glycero-3-phospho-(1'-sn-glycerol) = a 1,2-diacyl-sn-glycero-3-phospho-1'-(3'-O-L-lysyl)-sn-glycerol + tRNA(Lys). In terms of biological role, catalyzes the transfer of a lysyl group from L-lysyl-tRNA(Lys) to membrane-bound phosphatidylglycerol (PG), which produces lysylphosphatidylglycerol (LPG), one of the components of the bacterial membrane with a positive net charge. LPG synthesis contributes to the resistance to cationic antimicrobial peptides (CAMPs) and likely protects B.subtilis against its own CAMPs and against those produced by competiting microorganisms (bacteriocins). In fact, the modification of anionic phosphatidylglycerol with positively charged L-lysine results in repulsion of the peptides. This is Phosphatidylglycerol lysyltransferase (mprF) from Bacillus subtilis (strain 168).